The sequence spans 333 residues: Small GTPase-like protein LIP2 (333 aa).

Positions 11-288 are small GTPase-like; that stretch reads NKEHMVAPLC…YKYNTLPQHN (278 aa). GTP-binding positions include 29–36, 90–94, and 160–163; these read GDSGVGKS, DVSGH, and NKAD. A compositionally biased stretch (polar residues) spans 242–253; that stretch reads SPSSAWSLSHAP. The tract at residues 242-265 is disordered; that stretch reads SPSSAWSLSHAPSQRLDEGTSDED.

It belongs to the small GTPase superfamily.

In Arabidopsis thaliana (Mouse-ear cress), this protein is Small GTPase-like protein LIP2.